Consider the following 464-residue polypeptide: F-box/WD repeat-containing protein 12 (464 aa).

One can recognise an F-box domain in the interval 1–45 (MEIRLPDLALKRIFSFLDLFGLLQVSQVNKHWNRIADSDYLWRSL). 8 WD repeats span residues 89–132 (YKVT…CAWD), 136–174 (GTMI…KVWN), 178–217 (RDAL…YTFT), 222–263 (RDVS…FLTE), 270–315 (EGSV…ITFD), 320–367 (KTGG…LLFS), 370–407 (GFLL…YMWE), and 416–461 (RSCC…VMYS).

In terms of assembly, interacts with SKP1. Interacts with CUL1. Interacts with IL22RA1. Ubiquitously expressed.

It functions in the pathway protein modification; protein ubiquitination. Substrate-recognition component of the SCF (SKP1-CUL1-F-box protein)-type E3 ubiquitin ligase complex. Promotes degradation of interleukin-22 receptor subunit IL22RA1 in resting and IL22-stimulated conditions by facilitating its ubiquitination. Functions as a cell growth suppressor. The polypeptide is F-box/WD repeat-containing protein 12 (FBXW12) (Homo sapiens (Human)).